A 123-amino-acid chain; its full sequence is Large ribosomal subunit protein bL17 (123 aa).

This sequence belongs to the bacterial ribosomal protein bL17 family. As to quaternary structure, part of the 50S ribosomal subunit. Contacts protein L32.

This Exiguobacterium sibiricum (strain DSM 17290 / CCUG 55495 / CIP 109462 / JCM 13490 / 255-15) protein is Large ribosomal subunit protein bL17.